The chain runs to 89 residues: Signal recognition particle 19 kDa protein (89 aa).

The protein belongs to the SRP19 family. Part of the signal recognition particle protein translocation system, which is composed of SRP and FtsY. Archaeal SRP consists of a 7S RNA molecule of 300 nucleotides and two protein subunits: SRP54 and SRP19.

It localises to the cytoplasm. Its function is as follows. Involved in targeting and insertion of nascent membrane proteins into the cytoplasmic membrane. Binds directly to 7S RNA and mediates binding of the 54 kDa subunit of the SRP. The polypeptide is Signal recognition particle 19 kDa protein (Methanococcus maripaludis (strain C5 / ATCC BAA-1333)).